Consider the following 339-residue polypeptide: Glycerol-3-phosphate dehydrogenase [NAD(P)+] (339 aa).

The NADPH site is built by Ser14, Tyr15, His35, and Lys109. Lys109, Gly138, and Thr140 together coordinate sn-glycerol 3-phosphate. Ala142 contacts NADPH. Positions 194, 247, 257, 258, and 259 each coordinate sn-glycerol 3-phosphate. The active-site Proton acceptor is Lys194. Arg258 lines the NADPH pocket. Val282 and Glu284 together coordinate NADPH.

It belongs to the NAD-dependent glycerol-3-phosphate dehydrogenase family.

It localises to the cytoplasm. The enzyme catalyses sn-glycerol 3-phosphate + NAD(+) = dihydroxyacetone phosphate + NADH + H(+). It carries out the reaction sn-glycerol 3-phosphate + NADP(+) = dihydroxyacetone phosphate + NADPH + H(+). It participates in membrane lipid metabolism; glycerophospholipid metabolism. In terms of biological role, catalyzes the reduction of the glycolytic intermediate dihydroxyacetone phosphate (DHAP) to sn-glycerol 3-phosphate (G3P), the key precursor for phospholipid synthesis. The sequence is that of Glycerol-3-phosphate dehydrogenase [NAD(P)+] from Shewanella pealeana (strain ATCC 700345 / ANG-SQ1).